The primary structure comprises 343 residues: Signal peptide peptidase 2 (343 aa).

At 1-19 (MKTHERAANLALAGLSLAP) the chain is on the lumenal side. A helical transmembrane segment spans residues 20-40 (LVVKVNPNANVILTACLAVYV). Topologically, residues 41–62 (GCYRSVKPTPPAETMSKEHAMR) are cytoplasmic. The chain crosses the membrane as a helical span at residues 63–83 (FPLVGSAMLLSLFLLFKFLSK). Residues 84 to 89 (DLVNTV) lie on the Lumenal side of the membrane. The helical transmembrane segment at 90–110 (LTAYFFILGIAALCATLLPSI) threads the bilayer. Residues 111-141 (KRFLPKEWNDNAIVWRAPLFHSLSVEFTRSQ) are Cytoplasmic-facing. A helical transmembrane segment spans residues 142–162 (VVASIPGFFFCIWYAAKKHWL). The Lumenal portion of the chain corresponds to 163–165 (ANN). Residues 166–186 (VLGISFCIQGIEMLSLGSFKT) form a helical membrane-spanning segment. Topologically, residues 187–188 (GA) are cytoplasmic. The helical transmembrane segment at 189–209 (ILLSGLFFYDIFWVFFTPVMV) threads the bilayer. Residue Asp198 is part of the active site. Over 210–230 (SVAKSFDAPIKLLFPTGDAAR) the chain is Lumenal. A helical transmembrane segment spans residues 231–251 (PFSMLGLGDIVIPGIFVALAL). Asp239 is an active-site residue. Residues 252–266 (RFDVSRGIKNRYFNS) lie on the Cytoplasmic side of the membrane. A helical membrane pass occupies residues 267-287 (AFLGYTVGLTVTIIVMNWFQA). The Lumenal portion of the chain corresponds to 288-290 (AQP). The PAL motif lies at 290–292 (PAL). Residues 291–311 (ALLYIVPGVIGFVAVHCLWNG) form a helical membrane-spanning segment. Residues 312-343 (EVKPLLEYNESKAEEEEACEEDTDSKQNKKKE) lie on the Cytoplasmic side of the membrane. The span at 324 to 334 (AEEEEACEEDT) shows a compositional bias: acidic residues. The interval 324–343 (AEEEEACEEDTDSKQNKKKE) is disordered. The Endoplasmic reticulum targeting signal motif lies at 340 to 343 (KKKE).

The protein belongs to the peptidase A22B family. As to expression, ubiquitous.

The protein resides in the endoplasmic reticulum membrane. In terms of biological role, intramembrane-cleaving aspartic protease (I-CLiP) that cleaves type II membrane signal peptides in the hydrophobic plane of the membrane. Catalyzes intramembrane proteolysis of some signal peptides after they have been cleaved from a preprotein, resulting in the release of the fragment from the ER membrane into the cytoplasm. The protein is Signal peptide peptidase 2 (SPP2) of Oryza sativa subsp. japonica (Rice).